Consider the following 140-residue polypeptide: Callisulfakinin (140 aa).

An N-terminal signal peptide occupies residues 1–30 (MYSQQRIFNSKYFIFFIAVLSIFWLPTMSA). The propeptide occupies 31–109 (RNLENSKNEN…LEYEDEDRSK (79 aa)). Residue Y114 is modified to Sulfotyrosine. Position 119 is a phenylalanine amide (F119). Y131 bears the Sulfotyrosine mark. F136 bears the Phenylalanine amide mark. Positions 139 to 140 (SI) are excised as a propeptide.

It belongs to the gastrin/cholecystokinin family. In brain, it is specifically expressed in four pairs of neurons. Not expressed in other cells of the brain and in the thoracico-abdominal ganglion.

It localises to the secreted. Callisulfakinin I is a neuropeptide. The existence of Callisulfakinin II is uncertain. In Calliphora vomitoria (Blue bottle fly), this protein is Callisulfakinin.